Here is a 334-residue protein sequence, read N- to C-terminus: Holliday junction branch migration complex subunit RuvB (334 aa).

Residues 4-184 (ADRLISAGVI…FGIVQRLEFY (181 aa)) form a large ATPase domain (RuvB-L) region. Residues Ile23, Arg24, Gly65, Lys68, Thr69, Thr70, 131–133 (EDY), Arg174, Tyr184, and Arg221 contribute to the ATP site. Thr69 contributes to the Mg(2+) binding site. Residues 185–255 (QVADLEHIVS…VAMKALDMLN (71 aa)) are small ATPAse domain (RuvB-S). A head domain (RuvB-H) region spans residues 258–334 (AEGFDFMDRK…YKHFGITREE (77 aa)). 3 residues coordinate DNA: Arg294, Arg313, and Arg318.

The protein belongs to the RuvB family. As to quaternary structure, homohexamer. Forms an RuvA(8)-RuvB(12)-Holliday junction (HJ) complex. HJ DNA is sandwiched between 2 RuvA tetramers; dsDNA enters through RuvA and exits via RuvB. An RuvB hexamer assembles on each DNA strand where it exits the tetramer. Each RuvB hexamer is contacted by two RuvA subunits (via domain III) on 2 adjacent RuvB subunits; this complex drives branch migration. In the full resolvosome a probable DNA-RuvA(4)-RuvB(12)-RuvC(2) complex forms which resolves the HJ.

It localises to the cytoplasm. The enzyme catalyses ATP + H2O = ADP + phosphate + H(+). The RuvA-RuvB-RuvC complex processes Holliday junction (HJ) DNA during genetic recombination and DNA repair, while the RuvA-RuvB complex plays an important role in the rescue of blocked DNA replication forks via replication fork reversal (RFR). RuvA specifically binds to HJ cruciform DNA, conferring on it an open structure. The RuvB hexamer acts as an ATP-dependent pump, pulling dsDNA into and through the RuvAB complex. RuvB forms 2 homohexamers on either side of HJ DNA bound by 1 or 2 RuvA tetramers; 4 subunits per hexamer contact DNA at a time. Coordinated motions by a converter formed by DNA-disengaged RuvB subunits stimulates ATP hydrolysis and nucleotide exchange. Immobilization of the converter enables RuvB to convert the ATP-contained energy into a lever motion, pulling 2 nucleotides of DNA out of the RuvA tetramer per ATP hydrolyzed, thus driving DNA branch migration. The RuvB motors rotate together with the DNA substrate, which together with the progressing nucleotide cycle form the mechanistic basis for DNA recombination by continuous HJ branch migration. Branch migration allows RuvC to scan DNA until it finds its consensus sequence, where it cleaves and resolves cruciform DNA. The sequence is that of Holliday junction branch migration complex subunit RuvB from Yersinia enterocolitica serotype O:8 / biotype 1B (strain NCTC 13174 / 8081).